The chain runs to 522 residues: 3-octaprenyl-4-hydroxybenzoate carboxy-lyase (522 aa).

A Mn(2+)-binding site is contributed by asparagine 181. Residues 184 to 186, 198 to 200, and 203 to 204 contribute to the prenylated FMN site; these read IYR, RWL, and RG. Glutamate 247 lines the Mn(2+) pocket. Aspartate 322 functions as the Proton donor in the catalytic mechanism.

Belongs to the UbiD family. In terms of assembly, homohexamer. Requires prenylated FMN as cofactor. The cofactor is Mn(2+).

It localises to the cell membrane. It catalyses the reaction a 4-hydroxy-3-(all-trans-polyprenyl)benzoate + H(+) = a 2-(all-trans-polyprenyl)phenol + CO2. The protein operates within cofactor biosynthesis; ubiquinone biosynthesis. Functionally, catalyzes the decarboxylation of 3-octaprenyl-4-hydroxy benzoate to 2-octaprenylphenol, an intermediate step in ubiquinone biosynthesis. The protein is 3-octaprenyl-4-hydroxybenzoate carboxy-lyase of Paraburkholderia xenovorans (strain LB400).